Here is a 345-residue protein sequence, read N- to C-terminus: UDP-3-O-acylglucosamine N-acyltransferase 3 (345 aa).

Catalysis depends on histidine 236, which acts as the Proton acceptor.

The protein belongs to the transferase hexapeptide repeat family. LpxD subfamily. Homotrimer.

It carries out the reaction a UDP-3-O-[(3R)-3-hydroxyacyl]-alpha-D-glucosamine + a (3R)-hydroxyacyl-[ACP] = a UDP-2-N,3-O-bis[(3R)-3-hydroxyacyl]-alpha-D-glucosamine + holo-[ACP] + H(+). Its pathway is bacterial outer membrane biogenesis; LPS lipid A biosynthesis. Its function is as follows. Catalyzes the N-acylation of UDP-3-O-acylglucosamine using 3-hydroxyacyl-ACP as the acyl donor. Is involved in the biosynthesis of lipid A, a phosphorylated glycolipid that anchors the lipopolysaccharide to the outer membrane of the cell. The protein is UDP-3-O-acylglucosamine N-acyltransferase 3 of Gloeobacter violaceus (strain ATCC 29082 / PCC 7421).